A 238-amino-acid polypeptide reads, in one-letter code: Pyridoxine 5'-phosphate synthase (238 aa).

3-amino-2-oxopropyl phosphate is bound by residues Asn-7 and Arg-18. Catalysis depends on His-43, which acts as the Proton acceptor. 2 residues coordinate 1-deoxy-D-xylulose 5-phosphate: Arg-45 and His-50. The active-site Proton acceptor is Glu-70. Residue Thr-100 coordinates 1-deoxy-D-xylulose 5-phosphate. Catalysis depends on His-190, which acts as the Proton donor. Residues Asp-191 and 213-214 each bind 3-amino-2-oxopropyl phosphate; that span reads GH.

The protein belongs to the PNP synthase family. Homooctamer; tetramer of dimers.

It localises to the cytoplasm. It catalyses the reaction 3-amino-2-oxopropyl phosphate + 1-deoxy-D-xylulose 5-phosphate = pyridoxine 5'-phosphate + phosphate + 2 H2O + H(+). Its pathway is cofactor biosynthesis; pyridoxine 5'-phosphate biosynthesis; pyridoxine 5'-phosphate from D-erythrose 4-phosphate: step 5/5. Functionally, catalyzes the complicated ring closure reaction between the two acyclic compounds 1-deoxy-D-xylulose-5-phosphate (DXP) and 3-amino-2-oxopropyl phosphate (1-amino-acetone-3-phosphate or AAP) to form pyridoxine 5'-phosphate (PNP) and inorganic phosphate. The polypeptide is Pyridoxine 5'-phosphate synthase (Porphyromonas gingivalis (strain ATCC 33277 / DSM 20709 / CIP 103683 / JCM 12257 / NCTC 11834 / 2561)).